We begin with the raw amino-acid sequence, 887 residues long: Pre-mRNA-splicing factor cwf22 (887 aa).

A disordered region spans residues 1-27 (MEKEDKSFGIGMLDYNRENPESSGHSR). Positions 124–307 (KKSINGLINK…EVLFQTRKDK (184 aa)) constitute an MIF4G domain. A disordered region spans residues 366 to 401 (ILGEEDDDENEEDEEDSEETSESEEDESVNDEKPQV). Positions 368-394 (GEEDDDENEEDEEDSEETSESEEDESV) are enriched in acidic residues. Positions 411–527 (NLRKSIYLTI…GWEVYDCVRL (117 aa)) constitute an MI domain. 2 disordered regions span residues 607–834 (MPKS…KTYH) and 867–887 (GELY…PRAD). Over residues 618–662 (EGYSSGSETGSTYSSSYSSTYSRGRSYSRSTRSYSKSRSYSRSRS) the composition is skewed to low complexity. Residue Ser-662 is modified to Phosphoserine. Phosphothreonine is present on Thr-664. Residues 677-690 (KDRELSPRGRERSS) are compositionally biased toward basic and acidic residues. Residues 691–712 (NRNSYSDLSRSSSLSRGRSRSY) show a composition bias toward low complexity. The segment covering 717–726 (RLIESEDKGY) has biased composition (basic and acidic residues). A compositionally biased stretch (basic residues) spans 736-746 (RKYRSRQRYRR). 2 stretches are compositionally biased toward low complexity: residues 747–762 (SYAG…SRSP) and 769–791 (SMSC…SRSP). The span at 799–809 (DSLSYNRQYSP) shows a compositional bias: polar residues.

It belongs to the CWC22 family. Belongs to the 40S cdc5-associated complex (or cwf complex), a spliceosome sub-complex reminiscent of a late-stage spliceosome composed of the U2, U5 and U6 snRNAs and at least brr2, cdc5, cwf2/prp3, cwf3/syf1, cwf4/syf3, cwf5/ecm2, spp42/cwf6, cwf7/spf27, cwf8, cwf9, cwf10, cwf11, cwf12, prp45/cwf13, cwf14, cwf15, cwf16, cwf17, cwf18, cwf19, cwf20, cwf21, cwf22, cwf23, cwf24, cwf25, cwf26, cyp7/cwf27, cwf28, cwf29/ist3, lea1, msl1, prp5/cwf1, prp10, prp12/sap130, prp17, prp22, sap61, sap62, sap114, sap145, slu7, smb1, smd1, smd3, smf1, smg1 and syf2.

Its subcellular location is the cytoplasm. It is found in the nucleus. May be involved in pre-mRNA splicing. This Schizosaccharomyces pombe (strain 972 / ATCC 24843) (Fission yeast) protein is Pre-mRNA-splicing factor cwf22 (cwf22).